Consider the following 574-residue polypeptide: Cholinesterase (574 aa).

N-linked (GlcNAc...) asparagine glycosylation is present at Asn57. Cysteines 65 and 92 form a disulfide. An N-linked (GlcNAc...) asparagine glycan is attached at Asn106. Residue 116 to 117 (GG) coordinates substrate. Ser198 serves as the catalytic Acyl-ester intermediate. Residue Ser198 is modified to Phosphoserine. N-linked (GlcNAc...) asparagine glycans are attached at residues Asn241 and Asn256. Cys252 and Cys263 are joined by a disulfide. Catalysis depends on Glu325, which acts as the Charge relay system. A glycan (N-linked (GlcNAc...) asparagine) is linked at Asn341. Cys400 and Cys519 are joined by a disulfide. His438 acts as the Charge relay system in catalysis. Residues Asn455, Asn481, and Asn486 are each glycosylated (N-linked (GlcNAc...) asparagine).

It belongs to the type-B carboxylesterase/lipase family. Homotetramer; disulfide-linked. Dimer of dimers. In terms of tissue distribution, detected in blood plasma (at protein level). Present in most cells except erythrocytes.

The protein resides in the secreted. The catalysed reaction is an acylcholine + H2O = a carboxylate + choline + H(+). Functionally, esterase with broad substrate specificity. Contributes to the inactivation of the neurotransmitter acetylcholine. Can degrade neurotoxic organophosphate esters. In Equus caballus (Horse), this protein is Cholinesterase (BCHE).